The chain runs to 243 residues: tRNA (guanine-N(1)-)-methyltransferase (243 aa).

S-adenosyl-L-methionine contacts are provided by residues Gly-113 and Ile-133–Leu-138.

It belongs to the RNA methyltransferase TrmD family. As to quaternary structure, homodimer.

Its subcellular location is the cytoplasm. It catalyses the reaction guanosine(37) in tRNA + S-adenosyl-L-methionine = N(1)-methylguanosine(37) in tRNA + S-adenosyl-L-homocysteine + H(+). In terms of biological role, specifically methylates guanosine-37 in various tRNAs. The sequence is that of tRNA (guanine-N(1)-)-methyltransferase from Bacillus velezensis (strain DSM 23117 / BGSC 10A6 / LMG 26770 / FZB42) (Bacillus amyloliquefaciens subsp. plantarum).